The primary structure comprises 245 residues: uncharacterized protein (245 aa).

6 helical membrane passes run 38-58, 68-88, 100-120, 129-149, 194-214, and 217-237; these read IYPA…AIFI, TIEL…QGYF, IWSL…LILA, VLFI…FVSA, VNNI…FLMN, and IAFI…LIIH.

The protein belongs to the acyltransferase 3 family.

The protein localises to the cell membrane. This is an uncharacterized protein from Haemophilus influenzae (strain ATCC 51907 / DSM 11121 / KW20 / Rd).